The primary structure comprises 467 residues: Asparagine--tRNA ligase (467 aa).

Belongs to the class-II aminoacyl-tRNA synthetase family. As to quaternary structure, homodimer.

The protein resides in the cytoplasm. The enzyme catalyses tRNA(Asn) + L-asparagine + ATP = L-asparaginyl-tRNA(Asn) + AMP + diphosphate + H(+). This Histophilus somni (strain 2336) (Haemophilus somnus) protein is Asparagine--tRNA ligase.